A 383-amino-acid chain; its full sequence is MHC class I polypeptide-related sequence A (383 aa).

Residues Met-1 to Ala-23 form the signal peptide. Over Glu-24 to Trp-307 the chain is Extracellular. Asn-31 carries an N-linked (GlcNAc...) asparagine glycan. Residues Cys-59 and Cys-64 are joined by a disulfide bond. Asn-79 carries N-linked (GlcNAc...) asparagine glycosylation. Cys-119 and Cys-187 are joined by a disulfide. The region spanning Pro-207–Pro-296 is the Ig-like C1-type domain. Residues Asn-210, Asn-220, and Asn-261 are each glycosylated (N-linked (GlcNAc...) asparagine). A disulfide bridge links Cys-225 with Cys-282. The chain crosses the membrane as a helical span at residues Gln-308 to Val-328. At Arg-329 to Ala-383 the chain is on the cytoplasmic side. S-palmitoyl cysteine attachment occurs at residues Cys-330 and Cys-331.

The protein belongs to the MHC class I family. MIC subfamily. In terms of assembly, unlike classical MHC class I molecules, does not form a heterodimer with beta-2-microglobulin. Binds as a monomer to a KLRK1/NKG2D homodimer. KLRK1 forms a complex with HCST/DAP10 in which KLRK1 binds MICA while HCST acts as an adapter molecule which enables signal transduction. Interacts with PDIA6 on the surface of tumor cells, leading to disulfide bond reduction which is required for release of MICA from tumor cells. (Microbial infection) Interacts with human cytomegalovirus/HHV-5 protein UL142. In terms of processing, N-glycosylated. Glycosylation is not essential for interaction with KLRK1/NKG2D but enhances complex formation. Proteolytically cleaved and released from the cell surface of tumor cells which impairs KLRK1/NKG2D expression and T-cell activation. Post-translationally, palmitoylated on cysteine residues in the cytoplasmic tail leading to its association with membrane microdomains enriched in cholesterol. In terms of processing, N-glycosylation is necessary for cell surface expression. (Microbial infection) Ubiquitinated by human herpesvirus 8 protein K5, leading to degradation. Widely expressed with the exception of the central nervous system where it is absent. Expressed predominantly in gastric epithelium and also in monocytes, keratinocytes, endothelial cells, fibroblasts and in the outer layer of Hassal's corpuscles within the medulla of normal thymus. In skin, expressed mainly in the keratin layers, basal cells, ducts and follicles. Also expressed in many, but not all, epithelial tumors of lung, breast, kidney, ovary, prostate and colon. In thyomas, overexpressed in cortical and medullar epithelial cells. Tumors expressing MICA display increased levels of gamma delta T-cells.

It is found in the cell membrane. The protein localises to the cytoplasm. Functionally, widely expressed membrane-bound protein which acts as a ligand to stimulate an activating receptor KLRK1/NKG2D, expressed on the surface of essentially all human natural killer (NK), gammadelta T and CD8 alphabeta T-cells. Up-regulated in stressed conditions, such as viral and bacterial infections or DNA damage response, serves as signal of cellular stress, and engagement of KLRK1/NKG2D by MICA triggers NK-cells resulting in a range of immune effector functions, such as cytotoxicity and cytokine production. The polypeptide is MHC class I polypeptide-related sequence A (Homo sapiens (Human)).